Reading from the N-terminus, the 272-residue chain is MASSKFFTVLFLVLLTHANSSNDIYFNFQRFNETNLILQRDASVSSSGQLRLTNLNGNGEPRVGSLGRAFYSAPIQIWDNTTGTVASFATSFTFNIQVPNNAGPADGLAFALVPVGSQPKDKGGFLGLFDGSNSNFHTVAVEFDTLYNKDWDPTERHIGIDVNSIRSIKTTRWDFVNGENAEVLITYDSSTNLLVASLVYPSQKTSFIVSDTVDLKSVLPEWVSVGFSATTGINKGNVETNDVLSWSFASKLSDGTTSEGLNLANLVLNKIL.

The first 20 residues, 1 to 20 (MASSKFFTVLFLVLLTHANS), serve as a signal peptide directing secretion. N32 carries N-linked (GlcNAc...) (high mannose) asparagine glycosylation. Residue N80 is glycosylated (N-linked (GlcNAc...) (complex) asparagine).

This sequence belongs to the leguminous lectin family. Homotetramer. Post-translationally, N-glycosylated on Asn-80; contains xylose.

This insecticidal carbohydrate-binding lectin is toxic for the cowpea weevil. This Phaseolus vulgaris (Kidney bean) protein is Leucoagglutinating phytohemagglutinin (DLEC2).